The following is a 129-amino-acid chain: uncharacterized protein (129 aa).

The interval 1 to 129 (MWLWQDIQCC…HTSNGRTGDL (129 aa)) is disordered. Positions 87 to 100 (KGADTRRLPRETRP) are enriched in basic and acidic residues. Over residues 119 to 129 (PHTSNGRTGDL) the composition is skewed to polar residues.

This is an uncharacterized protein from Homo sapiens (Human).